Here is a 748-residue protein sequence, read N- to C-terminus: Basic juvenile hormone-suppressible protein 1 (748 aa).

Positions Met-1–Val-17 are cleaved as a signal peptide.

The protein belongs to the hemocyanin family. In terms of tissue distribution, fat body, and hemolymph of larvae.

The protein is Basic juvenile hormone-suppressible protein 1 (BJSP-1) of Trichoplusia ni (Cabbage looper).